We begin with the raw amino-acid sequence, 485 residues long: E3 ubiquitin-protein ligase TRIM34A (485 aa).

The RING-type zinc-finger motif lies at 15-59 (CPVCQELLTKALSLGCGHRVCQACLITKKNAVINPREKSSCPVCG). A B box-type zinc finger spans residues 91 to 132 (TKRDLCVHHGEKLLLFCKEDKKAICWVCERSQEHRGHHTFLW). Zn(2+) contacts are provided by Cys96, His99, Cys118, and His124. Residues 136-170 (VRECQENLQKALTRLRKEQEKVETLEADIKEDRLS) are a coiled coil. The B30.2/SPRY domain maps to 282-485 (LSGMLQKFRE…APMTLCPLNS (204 aa)).

This sequence belongs to the TRIM/RBCC family. As to quaternary structure, homotrimer. Interacts (via B-box and SPRY domain) with TRIM5.

It localises to the cytoplasm. The protein localises to the mitochondrion. The enzyme catalyses S-ubiquitinyl-[E2 ubiquitin-conjugating enzyme]-L-cysteine + [acceptor protein]-L-lysine = [E2 ubiquitin-conjugating enzyme]-L-cysteine + N(6)-ubiquitinyl-[acceptor protein]-L-lysine.. It functions in the pathway protein modification; protein ubiquitination. In terms of biological role, functions as antiviral protein and contributes to the defense against retroviral infections. Acts as a capsid-specific restriction factor with the help of TRIM5 and prevents infection from non-host-adapted retroviruses. During influenza A virus infection, promotes programmed cell death by targeting ZBP1 for 'Lys-63'-linked polyubiquitination. In turn, promotes ZBP1 recruitment of RIPK3 to mediate virus-induced programmed necrosis. Negatively regulates the function of mitochondria by enhancing mitochondrial depolarization leading to cytochrome c release and mitochondria-dependent apoptosis. Also promotes the formation of multinucleated giant cells by means of cell fusion and phagocytosis in epithelial cells. Plays an essential role in sustaining the integrity of the inner mucus layer in the colon by controlling the exocytosis of the major component of colonic mucus MUC2 from colonic goblet cells. This Mus musculus (Mouse) protein is E3 ubiquitin-protein ligase TRIM34A.